We begin with the raw amino-acid sequence, 316 residues long: Acetaldehyde dehydrogenase (316 aa).

13–16 is a binding site for NAD(+); sequence SGNI. The active-site Acyl-thioester intermediate is the cysteine 131. NAD(+) is bound by residues 162–170 and asparagine 290; that span reads SAGPGTRAN.

It belongs to the acetaldehyde dehydrogenase family.

It carries out the reaction acetaldehyde + NAD(+) + CoA = acetyl-CoA + NADH + H(+). In terms of biological role, catalyzes the conversion of acetaldehyde to acetyl-CoA, using NAD(+) and coenzyme A. Is the final enzyme in the meta-cleavage pathway for the degradation of 2-aminophenol. In Pseudomonas sp, this protein is Acetaldehyde dehydrogenase (amnH).